The primary structure comprises 701 residues: DNA ligase A (701 aa).

Residues 1–23 (MSEKATGEVEAELPEHPDADERR) are disordered. NAD(+) is bound by residues 49 to 53 (DAEFD), 99 to 100 (SL), and Glu-129. The N6-AMP-lysine intermediate role is filled by Lys-131. Arg-152, Glu-192, Lys-308, and Lys-332 together coordinate NAD(+). Residues Cys-426, Cys-429, Cys-445, and Cys-451 each contribute to the Zn(2+) site. The BRCT domain maps to 615–701 (SIERTLEGLS…EQGPPVEPAE (87 aa)).

Belongs to the NAD-dependent DNA ligase family. LigA subfamily. Mg(2+) serves as cofactor. Mn(2+) is required as a cofactor.

The catalysed reaction is NAD(+) + (deoxyribonucleotide)n-3'-hydroxyl + 5'-phospho-(deoxyribonucleotide)m = (deoxyribonucleotide)n+m + AMP + beta-nicotinamide D-nucleotide.. Functionally, DNA ligase that catalyzes the formation of phosphodiester linkages between 5'-phosphoryl and 3'-hydroxyl groups in double-stranded DNA using NAD as a coenzyme and as the energy source for the reaction. It is essential for DNA replication and repair of damaged DNA. Probably the only ligase required for non-homologous end joining (NHEJ) repair of 3-overhangs. In Mycolicibacterium smegmatis (strain ATCC 700084 / mc(2)155) (Mycobacterium smegmatis), this protein is DNA ligase A.